We begin with the raw amino-acid sequence, 114 residues long: MAQIQFSRGVAEPVIPDVRLTRSRSGQSGTATFYFREPSIFNSESTDEVTGMYLVDEEGEITTTEVKGKFINGKATDIEAILIMRSPEEWDRFMRFMERYAKEQGLEFSQAGQS.

It belongs to the Psb28 family. Part of the photosystem II complex.

Its subcellular location is the cellular thylakoid membrane. The protein is Photosystem II reaction center Psb28 protein of Rippkaea orientalis (strain PCC 8801 / RF-1) (Cyanothece sp. (strain PCC 8801)).